A 619-amino-acid chain; its full sequence is MLRIGSRCVRSVPKSSLRVSSTKIGKLFVRSVSDKPEEVFTKLSDENDPQRDAFFKYSWGTWLKNDKQEKEKRITKFSLEGLNSVIDDLYKQSIENAKRLSKSSIPPPAYLPNLTVSLPHNVKIENIGTVNPNEKIRIVSMASIHEGKHHRIYKIDTNAEKSFVLRIPYALDDENTLAYRLKSEVATMDFADLKLGLKVPKVYSFGVNALNPVRQPFILEEYIEGTLLMRSWTPLENDAEDGKSHKDKLNAVINPISKFQAKLAEVKFNAFGSLYFAKDYKTSEESAYEGETNEELKDRWRIGPSVERCLWRKKSTLNFDDRKQYLGPWDISSPLDIVKCTGLLEAENARARLGLVQAHASPEVVAEDILKDQIKTFDNLAKVAPDLINTKTTSIPKMENLLKPRLHHPDLDPMNVILKEDDDVPYLLDFEGSSIKPYILQNTPQFVAYDGPKIYDLEKDIEGYKDMEESEKAKLEFMYKRTRNQFLWEFALNENLPELISSVAPPIKVLRNPYVAAIERKSDEEYLLIEEALLQLAEVWPIFANNKLVNAAEYPLKYSEEEVKKHADALNAYHEKLISQPFAATQGWMPQDMFDNLVQGGILVKNEKGDYVISRTEDA.

A mitochondrion-targeting transit peptide spans 1–31 (MLRIGSRCVRSVPKSSLRVSSTKIGKLFVRS).

Belongs to the AIM9 family.

It is found in the mitochondrion. This chain is Altered inheritance of mitochondria protein 9, mitochondrial (AIM9), found in Kluyveromyces lactis (strain ATCC 8585 / CBS 2359 / DSM 70799 / NBRC 1267 / NRRL Y-1140 / WM37) (Yeast).